We begin with the raw amino-acid sequence, 364 residues long: Pre-mRNA-splicing factor SLT11 (364 aa).

The tract at residues 331-364 is disordered; sequence KSTDNAKNDKKKTSKKVHKDRSKKSKPRANKLTI. The span at 339–364 shows a compositional bias: basic residues; the sequence is DKKKTSKKVHKDRSKKSKPRANKLTI.

The protein belongs to the SLT11 family. In terms of assembly, belongs to the CWC complex (or CEF1-associated complex), a spliceosome subcomplex composed of the U2, U5 and U6 snRNAs and at least BUD13, BUD31, BRR2, CDC40, CEF1, CLF1, CUS1, CWC2, CWC15, CWC21, CWC22, CWC23, CWC24, CWC25, CWC27, ECM2, HSH155, IST3, ISY1, LEA1, MSL1, NTC20, PRP8, PRP9, PRP11, PRP19, PRP21, PRP22, PRP45, PRP46, SLU7, SMB1, SMD1, SMD2, SMD3, SMX2, SMX3, SNT309, SNU114, SPP2, SYF1, SYF2, RSE1 and YJU2. Interacts with SLU7.

It is found in the nucleus. Functionally, involved in pre-mRNA splicing. Facilitates the cooperative formation of U2/U6 helix II in association with stem II in the spliceosome. Binds to RNA. This is Pre-mRNA-splicing factor SLT11 (ECM2) from Saccharomyces cerevisiae (strain ATCC 204508 / S288c) (Baker's yeast).